Here is a 357-residue protein sequence, read N- to C-terminus: Phosphoribosylformylglycinamidine cyclo-ligase (357 aa).

This sequence belongs to the AIR synthase family.

The protein localises to the cytoplasm. The catalysed reaction is 2-formamido-N(1)-(5-O-phospho-beta-D-ribosyl)acetamidine + ATP = 5-amino-1-(5-phospho-beta-D-ribosyl)imidazole + ADP + phosphate + H(+). Its pathway is purine metabolism; IMP biosynthesis via de novo pathway; 5-amino-1-(5-phospho-D-ribosyl)imidazole from N(2)-formyl-N(1)-(5-phospho-D-ribosyl)glycinamide: step 2/2. In Rhodopseudomonas palustris (strain ATCC BAA-98 / CGA009), this protein is Phosphoribosylformylglycinamidine cyclo-ligase.